Reading from the N-terminus, the 84-residue chain is Delta-conotoxin-like Bt6.4 (84 aa).

Residues 1–22 (MKLTCMVIVAVLFLTAWTSVMA) form the signal peptide. The propeptide occupies 23–57 (DGSINRPDIAEGWQKFFSKARDEMKNRAASELNKR). Cystine bridges form between C58–C74, C65–C78, and C73–C82.

Belongs to the conotoxin O1 superfamily. In terms of tissue distribution, expressed by the venom duct.

The protein resides in the secreted. In terms of biological role, this toxin activates voltage-gated sodium channels. It shifts the voltage-dependence of activation to more hyperpolarized potentials but has only little effect on channel inactivation. It is active on Nav1.3/SCN3A (EC(50)=3.98 nM), Nav1.4/SCN4A (EC(50)=4.99 nM), Nav1.6/SCN8A (EC(50)=1.27 nM) and Nav1.7/SCN9A (EC(50)=2.42 nM) voltage-gated sodium channels. In vivo, it induces nocifensive or pain-like behaviors in mice when injected intraplantarly. This Conus betulinus (Beech cone) protein is Delta-conotoxin-like Bt6.4.